A 406-amino-acid chain; its full sequence is Phosphatidylinositol 5-phosphate 4-kinase type-2 alpha (406 aa).

N-acetylalanine is present on alanine 2. Position 3 is a phosphothreonine (threonine 3). A Phosphoserine modification is found at serine 14. The region spanning 33–405 is the PIPK domain; sequence ASDPLLSVLM…RFLDFIGHIL (373 aa). Residues 59–65 are required for interaction with PIP5K1A; the sequence is VMLMPDD. N6-acetyllysine is present on residues lysine 89 and lysine 145. Positions 288–329 are disordered; that stretch reads QEEVECEENDGEEEGESDGTHPVGTPPDSPGNTLNSSPPLAP. Over residues 289-304 the composition is skewed to acidic residues; the sequence is EEVECEENDGEEEGES.

In terms of assembly, homodimer. Interacts with PIP4K2B; the interaction may regulate localization to the nucleus. Probably interacts with PIP5K1A; the interaction inhibits PIP5K1A kinase activity. Phosphorylated in tyrosines. Phosphorylation is induced by light and increases kinase activity.

It is found in the cell membrane. It localises to the nucleus. The protein localises to the lysosome. Its subcellular location is the cytoplasm. The protein resides in the photoreceptor inner segment. It is found in the cell projection. It localises to the cilium. The protein localises to the photoreceptor outer segment. It catalyses the reaction a 1,2-diacyl-sn-glycero-3-phospho-(1D-myo-inositol-5-phosphate) + ATP = a 1,2-diacyl-sn-glycero-3-phospho-(1D-myo-inositol-4,5-bisphosphate) + ADP + H(+). The enzyme catalyses 1,2-dihexadecanoyl-sn-glycero-3-phospho-(1D-myo-inositol-5-phosphate) + ATP = 1,2-dihexadecanoyl-sn-glycero-3-phospho-(1D-myo-inositol-4,5-bisphosphate) + ADP + H(+). The catalysed reaction is 1,2-dihexadecanoyl-sn-glycero-3-phospho-(1D-myo-inositol-5-phosphate) + GTP = 1,2-dihexadecanoyl-sn-glycero-3-phospho-(1D-myo-inositol-4,5-bisphosphate) + GDP + H(+). With respect to regulation, in rod outer segments, activated by light. Catalyzes the phosphorylation of phosphatidylinositol 5-phosphate (PtdIns5P) on the fourth hydroxyl of the myo-inositol ring, to form phosphatidylinositol 4,5-bisphosphate (PtdIns(4,5)P2). Has both ATP- and GTP-dependent kinase activities. May exert its function by regulating the levels of PtdIns5P, which functions in the cytosol by increasing AKT activity and in the nucleus signals through ING2. May regulate the pool of cytosolic PtdIns5P in response to the activation of tyrosine phosphorylation. May be involved in thrombopoiesis, and the terminal maturation of megakaryocytes and regulation of their size. May negatively regulate insulin-stimulated glucose uptake by lowering the levels of PtdIns5P. The polypeptide is Phosphatidylinositol 5-phosphate 4-kinase type-2 alpha (PIP4K2A) (Sus scrofa (Pig)).